A 469-amino-acid chain; its full sequence is Melanopsin (469 aa).

The Extracellular segment spans residues 1 to 71; that stretch reads MDSPPGPTAP…VDVPDHAHYI (71 aa). The N-linked (GlcNAc...) asparagine glycan is linked to asparagine 30. The helical transmembrane segment at 72–92 threads the bilayer; sequence LGTVILLVGLTGMLGNLTVIY. The Cytoplasmic segment spans residues 93-106; the sequence is TFCRSRSLRTPANM. A helical membrane pass occupies residues 107 to 127; sequence LIINLAVSDFLMSFTQAPVFF. Residues 128-143 lie on the Extracellular side of the membrane; the sequence is ASSLYKKWLFGETGCE. Cysteine 142 and cysteine 220 form a disulfide bridge. A helical transmembrane segment spans residues 144–164; it reads FYAFCGAVLGITSMITLTAIA. Residues 165–187 are Cytoplasmic-facing; sequence LDRYLVITRPLATIGMGSKRRTA. The helical transmembrane segment at 188–208 threads the bilayer; that stretch reads LVLLGIWLYALAWSLPPFFGW. Over 209 to 237 the chain is Extracellular; sequence SAYVPEGLLTSCSWDYVTFTPQVRAYTML. The chain crosses the membrane as a helical span at residues 238–258; the sequence is LFCFVFFLPLLVIIFCYISIF. The Cytoplasmic segment spans residues 259-295; that stretch reads RAIRETGRACEGWSESPQRRRQWHRLQSEWKMAKVAL. Residues 296 to 316 form a helical membrane-spanning segment; the sequence is IVILLFVLSWAPYSTVALVAF. Residues 317–328 are Extracellular-facing; sequence AGYSHILTPYMS. Residues 329 to 349 form a helical membrane-spanning segment; the sequence is SVPAVIAKASAIHNPIVYAIT. Residue lysine 336 is modified to N6-(retinylidene)lysine. Topologically, residues 350 to 469 are cytoplasmic; sequence HPKYRAAIAQ…SLDLGMQDAP (120 aa). The disordered stretch occupies residues 409–469; the sequence is GSESEVGWTD…SLDLGMQDAP (61 aa).

Belongs to the G-protein coupled receptor 1 family. Opsin subfamily.

Its subcellular location is the cell membrane. It localises to the cell projection. The protein resides in the axon. The protein localises to the dendrite. It is found in the perikaryon. Functionally, photoreceptor that binds cis-retinaldehydes. Contributes to pupillar reflex, photoentrainment and other non-image forming responses to light. May be involved in the optokinetic visual tracking response. May be involved in the regulation of retinal hyaloid vessel growth and regression. This is Melanopsin (OPN4) from Phodopus sungorus (Striped hairy-footed hamster).